Consider the following 397-residue polypeptide: Elongation factor Tu (397 aa).

The tr-type G domain maps to 10–207 (KPHVNVGTIG…TLDTYIPEPV (198 aa)). The interval 19–26 (GHVDHGKT) is G1. 19–26 (GHVDHGKT) is a GTP binding site. A Mg(2+)-binding site is contributed by Thr26. Residues 60-64 (GITIN) form a G2 region. A G3 region spans residues 81–84 (DCPG). GTP contacts are provided by residues 81–85 (DCPGH) and 136–139 (NKAD). Residues 136-139 (NKAD) are G4. The tract at residues 174–176 (SAL) is G5.

It belongs to the TRAFAC class translation factor GTPase superfamily. Classic translation factor GTPase family. EF-Tu/EF-1A subfamily. In terms of assembly, monomer.

The protein resides in the cytoplasm. The catalysed reaction is GTP + H2O = GDP + phosphate + H(+). In terms of biological role, GTP hydrolase that promotes the GTP-dependent binding of aminoacyl-tRNA to the A-site of ribosomes during protein biosynthesis. This chain is Elongation factor Tu, found in Ectopseudomonas mendocina (strain ymp) (Pseudomonas mendocina).